We begin with the raw amino-acid sequence, 276 residues long: MSIDSLPPLREVIERHDLMPKKSLGQNFLFDLNLTSKIARQAGDLRDQPVIEVGPGPGGLTRALLAQGAYVTAIERDDRCLEALAEIAAHYPGRLRIIAGDALEQDFTALFPEGPKPRIVANLPYNVGTQLLLNWLLVEPWPPFYSSMTLMFQREVAERIVAKPDSDHYGRLGVLAGWRTQAKIAFDVPPQAFTPPPKVMSSVVHIVPRETPLPCRAEALGQITQAAFGQRRKMLRQSLKSIGGAALLEKMGIDGTRRAETLSVEEFVALANACLP.

S-adenosyl-L-methionine is bound by residues Asn-27, Leu-29, Gly-54, Glu-75, Asp-101, and Asn-122.

Belongs to the class I-like SAM-binding methyltransferase superfamily. rRNA adenine N(6)-methyltransferase family. RsmA subfamily.

The protein localises to the cytoplasm. It catalyses the reaction adenosine(1518)/adenosine(1519) in 16S rRNA + 4 S-adenosyl-L-methionine = N(6)-dimethyladenosine(1518)/N(6)-dimethyladenosine(1519) in 16S rRNA + 4 S-adenosyl-L-homocysteine + 4 H(+). Its function is as follows. Specifically dimethylates two adjacent adenosines (A1518 and A1519) in the loop of a conserved hairpin near the 3'-end of 16S rRNA in the 30S particle. May play a critical role in biogenesis of 30S subunits. The protein is Ribosomal RNA small subunit methyltransferase A of Brucella abortus biovar 1 (strain 9-941).